The following is a 162-amino-acid chain: Caveolin-2 (162 aa).

Over 1–86 (MGLEKEKLEC…FELVKFIFYR (86 aa)) the chain is Cytoplasmic. Residues 87–107 (LLTTLLAVPAAFILGVVFGVL) constitute an intramembrane region (helical). Over 108-162 (SCIHIWLVMPVTRSFLMLLPSIQVVWKSVTDMFITPLFHSMGRSLSSIQVRTSDT) the chain is Cytoplasmic.

The protein belongs to the caveolin family. Homooligomer.

It is found in the golgi apparatus membrane. It localises to the cell membrane. Its subcellular location is the membrane. The protein resides in the caveola. In terms of biological role, may act as a scaffolding protein within caveolar membranes. Interacts directly with G-protein alpha subunits and can functionally regulate their activity. The chain is Caveolin-2 (cav2) from Takifugu rubripes (Japanese pufferfish).